The chain runs to 494 residues: DnaJ homolog subfamily C member 7 (494 aa).

Position 2 is an N-acetylalanine (A2). TPR repeat units follow at residues 28–61, 62–95, 96–129, 142–175, 177–209, 210–243, 256–289, 294–327, and 328–361; these read AETF…CPKN, ASYY…DDSF, VRGH…DHKN, VMEY…APAC, RFKI…DSTN, ADAL…APDH, LKAK…DPNN, AKLY…DDTY, and IKAY…EKTK. Residues 381 to 451 enclose the J domain; sequence DYYKILGVDK…KKKTRYDSGQ (71 aa). S393 carries the post-translational modification Phosphoserine.

In terms of assembly, associates with complexes containing chaperones HSP70 and HSP90. Interacts with the GAP domain of NF1. Interacts with HSP90AA1. Interacts with HSPA1A/B; the interaction is enhanced by ATP. Interacts with HSP90AB1. Interacts with PGR. Interacts with RAD9A; the interaction is interrupted by UV and heat shock treatments. Interacts with HUS1 and RAD1. Interacts with NR1I3. The DNAJC7-NR1I3 complex may also include HSP90. Interacts with HSPA8.

Its subcellular location is the cytoplasm. It localises to the nucleus. The protein resides in the cytoskeleton. Its function is as follows. Acts as a co-chaperone regulating the molecular chaperones HSP70 and HSP90 in folding of steroid receptors, such as the glucocorticoid receptor and the progesterone receptor. Proposed to act as a recycling chaperone by facilitating the return of chaperone substrates to early stages of chaperoning if further folding is required. In vitro, induces ATP-independent dissociation of HSP90 but not of HSP70 from the chaperone-substrate complexes. Recruits NR1I3 to the cytoplasm. The sequence is that of DnaJ homolog subfamily C member 7 (DNAJC7) from Homo sapiens (Human).